We begin with the raw amino-acid sequence, 186 residues long: NADH-dependent FMN reductase SfnF (186 aa).

Belongs to the SsuE family.

It carries out the reaction FMNH2 + NAD(+) = FMN + NADH + 2 H(+). Functionally, involved in the dimethyl sulfide degradation pathway. Catalyzes the NADH-dependent reduction of FMN. The protein is NADH-dependent FMN reductase SfnF of Pseudomonas putida (Arthrobacter siderocapsulatus).